A 211-amino-acid polypeptide reads, in one-letter code: Rho-related GTP-binding protein RhoF (211 aa).

Residue Met-1 is modified to N-acetylmethionine. Position 26 to 33 (Gly-26 to Thr-33) interacts with GTP. An Effector region motif is present at residues Tyr-48–Tyr-56. Residues Asp-73–Gln-77 and Cys-131–Asp-134 each bind GTP. Position 208 is a cysteine methyl ester (Cys-208). The S-geranylgeranyl cysteine moiety is linked to residue Cys-208. Positions Leu-209–Leu-211 are cleaved as a propeptide — removed in mature form.

It belongs to the small GTPase superfamily. Rho family.

The protein resides in the cell membrane. It localises to the cytoplasm. It is found in the cytoskeleton. In terms of biological role, plasma membrane-associated small GTPase which cycles between an active GTP-bound and an inactive GDP-bound state. Causes the formation of thin, actin-rich surface projections called filopodia. Functions cooperatively with CDC42 and Rac to generate additional structures, increasing the diversity of actin-based morphology. This is Rho-related GTP-binding protein RhoF (RHOF) from Homo sapiens (Human).